We begin with the raw amino-acid sequence, 1221 residues long: DNA topoisomerase 2 (1221 aa).

ATP-binding positions include Asn-65, Asn-94, 122–124 (SSN), 135–142 (GRHGYGAK), and 352–354 (QNK). The 115-residue stretch at 432–546 (RTLIVTEGDS…SLLVRNPGFI (115 aa)) folds into the Toprim domain. Mg(2+) contacts are provided by Glu-438, Asp-515, and Asp-517. The 417-residue stretch at 681-1097 (LAHSVDGLKP…TPVQLWLGEL (417 aa)) folds into the Topo IIA-type catalytic domain. Tyr-771 (O-(5'-phospho-DNA)-tyrosine intermediate) is an active-site residue. Positions 952-961 (GLTQRIHING) are interaction with DNA. The disordered stretch occupies residues 1158-1198 (VPPPTKRGAGGRSDGDGGATAAGAAAAVGGRGEKKGPGRAG). A compositionally biased stretch (gly residues) spans 1165–1177 (GAGGRSDGDGGAT).

This sequence belongs to the type II topoisomerase family. In terms of assembly, homodimer. The cofactor is Mg(2+). Mn(2+) serves as cofactor. It depends on Ca(2+) as a cofactor.

Its subcellular location is the nucleus. It carries out the reaction ATP-dependent breakage, passage and rejoining of double-stranded DNA.. Its function is as follows. Control of topological states of DNA by transient breakage and subsequent rejoining of DNA strands. Topoisomerase II makes double-strand breaks. The protein is DNA topoisomerase 2 (TOP2) of Trypanosoma brucei brucei.